Consider the following 647-residue polypeptide: DEAD-box ATP-dependent RNA helicase 18 (647 aa).

The Q motif motif lies at 23–51 (FSELSPALSPEVVKALKGGGFRRCTPVQA). Residues 54–232 (IPLLLSHKDV…KAGLRNPVRV (179 aa)) enclose the Helicase ATP-binding domain. Position 67 to 74 (67 to 74 (AATGSGKT)) interacts with ATP. The DEAD box signature appears at 180-183 (DEAD). Residues 274–430 (QLVDFLVQNN…DIVPQIRSAA (157 aa)) form the Helicase C-terminal domain. A coiled-coil region spans residues 507–582 (KYKDKAREKQ…RLLKKLKRGV (76 aa)). Positions 512 to 545 (AREKQRQKTLKRKAEELALRPEIEKRRKAPEKPE) are enriched in basic and acidic residues. Disordered regions lie at residues 512–565 (AREK…KEDM) and 590–647 (KLTG…TRRR). Residues 596-610 (ESDDDDSSDGGDSDL) show a composition bias toward acidic residues. Residues 619 to 633 (KVLKKIKQKGKAKGS) show a composition bias toward basic residues.

Belongs to the DEAD box helicase family. DDX55/SPB4 subfamily. In terms of assembly, interacts with BRI1. Phosphorylated.

It carries out the reaction ATP + H2O = ADP + phosphate + H(+). This Oryza sativa subsp. japonica (Rice) protein is DEAD-box ATP-dependent RNA helicase 18.